Reading from the N-terminus, the 227-residue chain is Superoxide dismutase [Cu-Zn] (227 aa).

A signal peptide spans 1–19 (MPKLLPPVVLAGCVVALGA). Cys-20 is lipidated: N-palmitoyl cysteine. The S-diacylglycerol cysteine moiety is linked to residue Cys-20. A disordered region spans residues 23-55 (PQHASSLPGTTPAVWTGSPSPSGAGAAEAAPAA). A compositionally biased stretch (low complexity) spans 39 to 55 (GSPSPSGAGAAEAAPAA). 2 residues coordinate Cu cation: His-103 and His-105. Residues Cys-110 and Cys-221 are joined by a disulfide bond. A Zn(2+)-binding site is contributed by Asp-145. His-182 serves as a coordination point for Cu cation.

This sequence belongs to the Cu-Zn superoxide dismutase family. Cu cation is required as a cofactor. Zn(2+) serves as cofactor.

The protein resides in the cell membrane. It carries out the reaction 2 superoxide + 2 H(+) = H2O2 + O2. In terms of biological role, destroys radicals which are normally produced within the cells and which are toxic to biological systems. May play a role in favoring mycobacterial survival in phagocytes. This is Superoxide dismutase [Cu-Zn] (sodC) from Mycolicibacterium paratuberculosis (strain ATCC BAA-968 / K-10) (Mycobacterium paratuberculosis).